The chain runs to 498 residues: Dynein regulatory complex subunit 5 (498 aa).

Disordered regions lie at residues 27-52 (ALGS…LKTK) and 200-223 (MPTP…EPEK). A compositionally biased stretch (low complexity) spans 28–47 (LGSSSTGPTSLKTSSTPTPG). LRR repeat units follow at residues 276–299 (CHTL…ILIR), 306–327 (ALEE…AAAK), 333–353 (RLRV…QSLA), 361–382 (NLVF…AIAH), 389–409 (CLSV…TLLS), and 417–438 (TLVS…QLLE).

Belongs to the DRC5 family. Component of the nexin-dynein regulatory complex (N-DRC). Interacts with DRC1. Interacts with FBXL13/DRC6, DRC3 and DRC7. In terms of tissue distribution, testis-specific (at protein level).

The protein localises to the cell projection. It localises to the cilium. Its subcellular location is the flagellum. The protein resides in the cytoplasm. It is found in the cytoskeleton. The protein localises to the flagellum axoneme. Its function is as follows. Component of the nexin-dynein regulatory complex (N-DRC) a key regulator of ciliary/flagellar motility which maintains the alignment and integrity of the distal axoneme and regulates microtubule sliding in motile axonemes. May play a role in the assembly of N-DRC. Required for sperm motility. The chain is Dynein regulatory complex subunit 5 (Tcte1) from Mus musculus (Mouse).